The following is a 244-amino-acid chain: Capsid protein (244 aa).

A Bipartite nuclear localization signal motif is present at residues 1–24 (MSTSKRKRADEAQWNKRSTKKKGS). Residues 1-39 (MSTSKRKRADEAQWNKRSTKKKGSAPQAKKPGGKVEKPS) form a disordered region.

Belongs to the geminiviridae capsid protein family. Homomultimer. Interacts with the movement protein. Binds to single-stranded and double-stranded viral DNA.

The protein localises to the virion. Its subcellular location is the host nucleus. Encapsidates the viral genome into characteristic twinned ('geminate') particles. Binds the genomic viral ssDNA and shuttles it into and out of the cell nucleus. Plays a role in protection of the genome from degradation, virus acquisition and transmission by insect vectors, infectivity, and systemic movement. The CP of monopartite geminiviruses is absolutely essential for virus movement. The polypeptide is Capsid protein (Avena sativa (Oat)).